The primary structure comprises 684 residues: Kelch repeat and BTB domain-containing protein 7 (684 aa).

A disordered region spans residues 1–27 (MQSREDVPRSRRLASPRGGRRPKRISK). Positions 10 to 26 (SRRLASPRGGRRPKRIS) are enriched in basic residues. Ser29 is modified (phosphoserine). The BTB domain occupies 63–138 (CDVTIEVVTP…CYTGRVSLSE (76 aa)). Kelch repeat units lie at residues 386-435 (AVCV…YLNG), 436-484 (YIYI…VVQN), 486-523 (LYAV…VFND), 524-564 (EIYC…IVNH), and 567-616 (KLLL…CLCA). The disordered stretch occupies residues 630-666 (ITEEDDARSESSTEWDLDGFSELDSESGSSSSFSDDE). Residues 631-654 (TEEDDARSESSTEWDLDGFSELDS) show a composition bias toward acidic residues. The short motif at 668–671 (WVQV) is the ATG8 interaction motif (AIM) element.

In terms of assembly, core component of a BCR3 (BTB-CUL3-RBX1) E3 ubiquitin ligase complex, also named Cul3-RING ubiquitin ligase complex CUL3(KBTBD6/7), composed of CUL3, RBX1, KBTBD6 and KBTBD7. Interacts with GABARAP; the interaction is direct and is required for the ubiquitination of TIAM1. Interacts with GABARAPL1, GABARAPL2 and MAP1LC3B; the interaction is direct.

It localises to the cytoplasm. The protein localises to the nucleus. It participates in protein modification; protein ubiquitination. As part of the CUL3(KBTBD6/7) E3 ubiquitin ligase complex functions as a substrate adapter for the RAC1 guanine exchange factor (GEF) TIAM1, mediating its 'Lys-48' ubiquitination and proteasomal degradation. By controlling this ubiquitination, regulates RAC1 signal transduction and downstream biological processes including the organization of the cytoskeleton, cell migration and cell proliferation. Ubiquitination of TIAM1 requires the membrane-associated protein GABARAP which may restrict locally the activity of the complex. This chain is Kelch repeat and BTB domain-containing protein 7, found in Homo sapiens (Human).